A 141-amino-acid polypeptide reads, in one-letter code: Large-conductance mechanosensitive channel (141 aa).

3 helical membrane passes run 16-36 (VIDL…VDSV), 40-60 (LIMP…MFIV), and 86-106 (GNFL…FLMV).

The protein belongs to the MscL family. As to quaternary structure, homopentamer.

The protein localises to the cell inner membrane. Its function is as follows. Channel that opens in response to stretch forces in the membrane lipid bilayer. May participate in the regulation of osmotic pressure changes within the cell. This chain is Large-conductance mechanosensitive channel, found in Cupriavidus necator (strain ATCC 17699 / DSM 428 / KCTC 22496 / NCIMB 10442 / H16 / Stanier 337) (Ralstonia eutropha).